We begin with the raw amino-acid sequence, 274 residues long: Kit ligand (274 aa).

Residues 1 to 25 (MKKTQTWIITCIYLQLLLFNPLVRT) form the signal peptide. Gln26 is subject to Pyrrolidone carboxylic acid. Residues 26-215 (QGICRNRVTD…SDSIEDSSLQ (190 aa)) lie on the Extracellular side of the membrane. 2 disulfide bridges follow: Cys29-Cys114 and Cys68-Cys164. N-linked (GlcNAc...) asparagine glycosylation is found at Asn90, Asn97, Asn145, and Asn196. A helical transmembrane segment spans residues 216 to 238 (WAAVALPAFFSLVIGFAFGALYW). Residues 239–274 (KKKQPNLTRTVENIQINEEDNEISMLQEKEREFQEV) lie on the Cytoplasmic side of the membrane.

This sequence belongs to the SCF family. In terms of assembly, homodimer, non-covalently linked. Heterotetramer with KIT, binding two KIT molecules; thereby mediates KIT dimerization and subsequent activation by autophosphorylation. A soluble form is produced by proteolytic processing of the extracellular domain.

It localises to the cytoplasm. The protein resides in the cytoskeleton. It is found in the cell membrane. Its subcellular location is the cell projection. The protein localises to the lamellipodium. It localises to the filopodium. The protein resides in the secreted. Ligand for the receptor-type protein-tyrosine kinase KIT. Plays an essential role in the regulation of cell survival and proliferation, hematopoiesis, stem cell maintenance, gametogenesis, mast cell development, migration and function, and in melanogenesis. KITLG/SCF binding can activate several signaling pathways. Promotes phosphorylation of PIK3R1, the regulatory subunit of phosphatidylinositol 3-kinase, and subsequent activation of the kinase AKT1. KITLG/SCF and KIT also transmit signals via GRB2 and activation of RAS, RAF1 and the MAP kinases MAPK1/ERK2 and/or MAPK3/ERK1. KITLG/SCF and KIT promote activation of STAT family members STAT1, STAT3 and STAT5. KITLG/SCF and KIT promote activation of PLCG1, leading to the production of the cellular signaling molecules diacylglycerol and inositol 1,4,5-trisphosphate. KITLG/SCF acts synergistically with other cytokines, probably interleukins. The protein is Kit ligand (KITLG) of Sus scrofa (Pig).